The following is a 629-amino-acid chain: Interleukin-23 receptor (629 aa).

The N-terminal stretch at 1–23 is a signal peptide; the sequence is MNQVTIQWDAVIALYILFSWCHG. The Extracellular portion of the chain corresponds to 24–355; the sequence is GITNINCSGH…LTSDNRGDIG (332 aa). The N-linked (GlcNAc...) asparagine; partial glycan is linked to Asn29. N-linked (GlcNAc...) asparagine glycosylation is found at Asn47, Asn81, and Asn141. 2 Fibronectin type-III domains span residues 127-217 and 219-318; these read IPDE…LDDI and IPSA…TPET. Asn180 carries N-linked (GlcNAc...) (high mannose) asparagine glycosylation. Asn232 and Asn262 each carry an N-linked (GlcNAc...) asparagine glycan. The N-linked (GlcNAc...) asparagine; partial glycan is linked to Asn273. Residues 356-376 form a helical membrane-spanning segment; that stretch reads LLLGMIVFAVMLSILSLIGIF. The Cytoplasmic segment spans residues 377–629; sequence NRSFRTGIKR…HFNRISLLEK (253 aa).

This sequence belongs to the type I cytokine receptor family. Type 2 subfamily. As to quaternary structure, heterodimer with IL12RB1. In presence of IL23, the heterodimer forms the IL23 receptor. Interacts with JAK2 and in presence of IL23 with STAT3. In terms of processing, phosphorylated in response to IL23. In terms of tissue distribution, expressed by monocytes, Th1, Th0, NK and dendritic cells. Isoform 1 is specifically expressed in NK cells.

It is found in the cell membrane. Functionally, associates with IL12RB1 to form the interleukin-23 receptor. Binds IL23 and mediates T-cells, NK cells and possibly certain macrophage/myeloid cells stimulation probably through activation of the Jak-Stat signaling cascade. IL23 functions in innate and adaptive immunity and may participate in acute response to infection in peripheral tissues. IL23 may be responsible for autoimmune inflammatory diseases and be important for tumorigenesis. The protein is Interleukin-23 receptor (IL23R) of Homo sapiens (Human).